Here is a 181-residue protein sequence, read N- to C-terminus: Oligoribonuclease (181 aa).

Residues Leu8–Leu171 form the Exonuclease domain. Tyr129 is an active-site residue.

It belongs to the oligoribonuclease family.

The protein resides in the cytoplasm. 3'-to-5' exoribonuclease specific for small oligoribonucleotides. The protein is Oligoribonuclease of Klebsiella pneumoniae subsp. pneumoniae (strain ATCC 700721 / MGH 78578).